The primary structure comprises 370 residues: A-type ATP synthase subunit C (370 aa).

It belongs to the V-ATPase V0D/AC39 subunit family. Has multiple subunits with at least A(3), B(3), C, D, E, F, H, I and proteolipid K(x).

Its subcellular location is the cell membrane. Functionally, component of the A-type ATP synthase that produces ATP from ADP in the presence of a proton gradient across the membrane. The chain is A-type ATP synthase subunit C from Pyrococcus furiosus (strain ATCC 43587 / DSM 3638 / JCM 8422 / Vc1).